A 240-amino-acid chain; its full sequence is APDWSKIPAREITVFHAGATSFEWIGSEHPGASIVKAGQPCIICHETKKGLDYTAKKLAPREPDAQAMPKTVSFPVSVQAAVEKGTLNVRLSFKPPADSKTGSDADNELKAAIMLLDIKVPQAKLAGCWTSCHKDMRGMPGGDAKKGKYVSAGSFELLQWKSGKTSAALPAGVKVESGKDGDRTTVTFSRKLGGAVVEGRSVPFGIAIHANRAAGRMHYVSLGYRLGIGGAPGEVQAAKQ.

Residues cysteine 41, cysteine 44, histidine 45, cysteine 128, cysteine 132, and histidine 133 each contribute to the heme c site.

Binds 2 heme c groups per subunit.

This Rhodocyclus tenuis (Rhodospirillum tenue) protein is Cytochrome c-551.